A 239-amino-acid polypeptide reads, in one-letter code: Probable intron-encoded endonuclease I-ZbiI (239 aa).

The protein belongs to the LAGLIDADG endonuclease family.

The protein localises to the mitochondrion. Endonuclease involved in mitochondrial 21S rRNA gene intron homing. This chain is Probable intron-encoded endonuclease I-ZbiI, found in Zygosaccharomyces bisporus.